The chain runs to 266 residues: Apolipoprotein A-I (266 aa).

The signal sequence occupies residues 1–18 (MKAVVLTLAVLFLTGSQA). 2 consecutive repeat copies span residues 67 to 88 (LKLL…EQIG) and 89 to 110 (PVTQ…QEMN). The segment at 67–266 (LKLLDNWDSL…DEATKKLNAQ (200 aa)) is 10 X approximate tandem repeats. Met109 carries the post-translational modification Methionine sulfoxide. A 3; half-length repeat occupies 111–121 (KDLEEVKKKVQ). 5 repeat units span residues 122–143 (PYLD…QKVA), 144–165 (PLGA…EKLS), 166–187 (PLGE…AQLA), 188–209 (PYSE…EGGG), and 210–231 (ATLT…EKAK). Residues 232–242 (PALEDLRQGLM) form a 9; half-length repeat. Repeat unit 10 spans residues 243 to 266 (PVLESFRASLLAAVDEATKKLNAQ).

The protein belongs to the apolipoprotein A1/A4/E family. As to quaternary structure, homodimer. Interacts with APOA1BP and CLU. Component of a sperm activating protein complex (SPAP), consisting of APOA1, an immunoglobulin heavy chain, an immunoglobulin light chain and albumin. Interacts with NDRG1. Interacts with SCGB3A2. Interacts with NAXE and YJEFN3. Post-translationally, glycosylated. Palmitoylated. In terms of processing, phosphorylation sites are present in the extracellular medium.

It localises to the secreted. In terms of biological role, participates in the reverse transport of cholesterol from tissues to the liver for excretion by promoting cholesterol efflux from tissues and by acting as a cofactor for the lecithin cholesterol acyltransferase (LCAT). As part of the SPAP complex, activates spermatozoa motility. The chain is Apolipoprotein A-I (APOA1) from Phoca vitulina (Harbor seal).